The sequence spans 311 residues: Mas-related G-protein coupled receptor member E (311 aa).

Residues 1–25 (MEPREAGQHAGAADGAQEDVAFNLV) lie on the Extracellular side of the membrane. The helical transmembrane segment at 26–46 (ILSLTEGLGLGGLLGNGAVLW) threads the bilayer. The Cytoplasmic segment spans residues 47–63 (LLSSNVYRNPFAIYLLD). The chain crosses the membrane as a helical span at residues 64–84 (VACADLIFLGCHMVAIIPDLL). The Extracellular segment spans residues 85–95 (QGRLDFPGFVQ). Residues 96 to 116 (TSLATLRFFCYIVGLSLLVAV) form a helical membrane-spanning segment. The Cytoplasmic segment spans residues 117 to 136 (SVEQCLAALFPAWYSCRRPR). A helical membrane pass occupies residues 137-157 (HLTTCVCALTWACCLLLHLLL). Over 158–177 (SGACTQFFGEPSRHLCRTLW) the chain is Extracellular. A helical transmembrane segment spans residues 178–198 (LVAAVLLAVLCCTMCGASLML). The Cytoplasmic portion of the chain corresponds to 199-216 (LLQVERGPQRPPPRGFPT). A helical membrane pass occupies residues 217–237 (LILLAVLLFLFCGLPFGIYWL). At 238-251 (SRNLLWHIPHYFYH) the chain is on the extracellular side. A helical transmembrane segment spans residues 252-272 (FSFLTAAVYCAAKPVVYFCLG). Topologically, residues 273–311 (SAQGRRLPLRLVLQRALGDEAELGAVRETSRRGLVDIAA) are cytoplasmic.

It belongs to the G-protein coupled receptor 1 family. Mas subfamily.

The protein resides in the cell membrane. Orphan receptor. May regulate nociceptor function and/or development, including the sensation or modulation of pain. In Macaca fascicularis (Crab-eating macaque), this protein is Mas-related G-protein coupled receptor member E (MRGPRE).